A 335-amino-acid chain; its full sequence is Nod factor export ATP-binding protein I (335 aa).

The 231-residue stretch at 37–267 (IDVASVTKSY…KIGCQVIEIY (231 aa)) folds into the ABC transporter domain. 69–76 (GPNGAGKS) is an ATP binding site.

The protein belongs to the ABC transporter superfamily. Lipooligosaccharide exporter (TC 3.A.1.102) family. In terms of assembly, the complex is composed of two ATP-binding proteins (NodI) and two transmembrane proteins (NodJ).

It localises to the cell inner membrane. Part of the ABC transporter complex NodIJ involved in the export of the nodulation factors (Nod factors), the bacterial signal molecules that induce symbiosis and subsequent nodulation induction. Nod factors are LCO (lipo-chitin oligosaccharide), a modified beta-1,4-linked N-acetylglucosamine oligosaccharide. This subunit is responsible for energy coupling to the transport system. The polypeptide is Nod factor export ATP-binding protein I (Rhizobium meliloti (strain 1021) (Ensifer meliloti)).